We begin with the raw amino-acid sequence, 224 residues long: Ribonuclease 3 (224 aa).

One can recognise an RNase III domain in the interval 4–126 (LDRLQHKIGY…IIGAMSLDSN (123 aa)). E39 lines the Mg(2+) pocket. The active site involves D43. Residues D112 and E115 each contribute to the Mg(2+) site. The active site involves E115. The 71-residue stretch at 153–223 (DPKTRLQEYL…AEQILKVLDI (71 aa)) folds into the DRBM domain.

The protein belongs to the ribonuclease III family. Homodimer. The cofactor is Mg(2+).

The protein resides in the cytoplasm. The enzyme catalyses Endonucleolytic cleavage to 5'-phosphomonoester.. Its function is as follows. Digests double-stranded RNA. Involved in the processing of primary rRNA transcript to yield the immediate precursors to the large and small rRNAs (23S and 16S). Processes some mRNAs, and tRNAs when they are encoded in the rRNA operon. Processes pre-crRNA and tracrRNA of type II CRISPR loci if present in the organism. This chain is Ribonuclease 3, found in Actinobacillus succinogenes (strain ATCC 55618 / DSM 22257 / CCUG 43843 / 130Z).